We begin with the raw amino-acid sequence, 199 residues long: Probable cobalt-precorrin-6B C(15)-methyltransferase (decarboxylating) (199 aa).

Residues threonine 24, 48–52, aspartate 72, and alanine 101 contribute to the S-adenosyl-L-methionine site; that span reads GCGTG.

The protein belongs to the methyltransferase superfamily. Archaeal-type CbiT family.

It carries out the reaction Co-precorrin-6B + S-adenosyl-L-methionine = Co-precorrin-7 + S-adenosyl-L-homocysteine + CO2. Its pathway is cofactor biosynthesis; adenosylcobalamin biosynthesis; cob(II)yrinate a,c-diamide from sirohydrochlorin (anaerobic route): step 8/10. Its function is as follows. Catalyzes the methylation of C-15 in cobalt-precorrin-6B followed by the decarboxylation of C-12 to form cobalt-precorrin-7. The polypeptide is Probable cobalt-precorrin-6B C(15)-methyltransferase (decarboxylating) (Saccharolobus solfataricus (strain ATCC 35092 / DSM 1617 / JCM 11322 / P2) (Sulfolobus solfataricus)).